Here is a 727-residue protein sequence, read N- to C-terminus: Putative ATP-dependent RNA helicase DHX15 (727 aa).

Residues 1-41 are disordered; that stretch reads MSKRKHESSDSNKKAMKKQQNKIEEEEEEITNTTTTTTTTN. Low complexity predominate over residues 31 to 41; it reads TNTTTTTTTTN. One can recognise a Helicase ATP-binding domain in the interval 87-251; sequence IKVIKENQVV…FENAPLIKVP (165 aa). 100–107 lines the ATP pocket; that stretch reads GETGSGKT. The DEAH box motif lies at 198–201; the sequence is DEAH. The region spanning 273–445 is the Helicase C-terminal domain; it reads AVRTVIDIHT…SVVLQLLKLG (173 aa).

Belongs to the DEAD box helicase family. DEAH subfamily. DDX15/PRP43 sub-subfamily.

It is found in the nucleus. It catalyses the reaction ATP + H2O = ADP + phosphate + H(+). Functionally, pre-mRNA processing factor involved in disassembly of spliceosomes after the release of mature mRNA. The chain is Putative ATP-dependent RNA helicase DHX15 (dhx15) from Dictyostelium discoideum (Social amoeba).